Here is a 368-residue protein sequence, read N- to C-terminus: Protein HGH1 homolog (368 aa).

It belongs to the HGH1 family.

This chain is Protein HGH1 homolog, found in Drosophila pseudoobscura pseudoobscura (Fruit fly).